Consider the following 391-residue polypeptide: Probable sugar efflux transporter (391 aa).

Helical transmembrane passes span 16–36 (VFVF…PVAL), 51–71 (VGLM…PLML), 82–102 (LLFL…AWNF), 110–130 (MGIA…VIRV), 138–158 (QALG…LPLG), 170–190 (TFGV…KLLP), 210–230 (PLLM…FTTY), 247–267 (ITTL…FLFG), 277–297 (FIAF…VFKN), 300–320 (WVVF…GISL), 338–358 (IYSG…SIVI), and 361–381 (LGLG…LFWL).

The protein belongs to the major facilitator superfamily. SotB (TC 2.A.1.2) family.

Its subcellular location is the cell inner membrane. Its function is as follows. Involved in the efflux of sugars. The physiological role may be the reduction of the intracellular concentration of toxic sugars or sugar metabolites. The chain is Probable sugar efflux transporter from Helicobacter pylori (strain ATCC 700392 / 26695) (Campylobacter pylori).